Here is a 303-residue protein sequence, read N- to C-terminus: Tyrosine recombinase XerC (303 aa).

One can recognise a Core-binding (CB) domain in the interval 6–92 (ASLAPQVEAF…ALRSFLNWLV (87 aa)). The region spanning 113-292 (HLPKNIDVDE…DFQHLATVYD (180 aa)) is the Tyr recombinase domain. Active-site residues include arginine 152, lysine 176, histidine 244, arginine 247, and histidine 270. Tyrosine 279 acts as the O-(3'-phospho-DNA)-tyrosine intermediate in catalysis.

Belongs to the 'phage' integrase family. XerC subfamily. Forms a cyclic heterotetrameric complex composed of two molecules of XerC and two molecules of XerD, in which XerC interacts with XerD via its C-terminal region, XerD interacts with XerC via its C-terminal region and so on.

The protein localises to the cytoplasm. FtsK may regulate the catalytic switch between XerC and XerD in the heterotetrameric complex during the two steps of the recombination process. Its function is as follows. Site-specific tyrosine recombinase, which acts by catalyzing the cutting and rejoining of the recombining DNA molecules. Binds cooperatively to specific DNA consensus sequences that are separated from XerD binding sites by a short central region, forming the heterotetrameric XerC-XerD complex that recombines DNA substrates. The complex is essential to convert dimers of the bacterial chromosome into monomers to permit their segregation at cell division. It also contributes to the segregational stability of plasmids. In the complex XerC specifically exchanges the top DNA strands. This Yersinia pestis protein is Tyrosine recombinase XerC.